Here is a 44-residue protein sequence, read N- to C-terminus: Photosystem I reaction center subunit IX (44 aa).

A helical transmembrane segment spans residues 7–27; it reads YLSVAPVLSTLWFGALAGLLI.

This sequence belongs to the PsaJ family.

The protein resides in the plastid. It localises to the chloroplast thylakoid membrane. May help in the organization of the PsaE and PsaF subunits. This Oryza nivara (Indian wild rice) protein is Photosystem I reaction center subunit IX.